The following is a 242-amino-acid chain: MSTLILIPARMASTRLPGKPLADISGAPMIVHVARRAAEAGLGRVVVATDTQSVAEAVRAHGFEAVMTRIDHESGSDRIHEALAALDPGRKVETIVNVQGDLPTIDPGIIAASLRPFEDAAVDIATLGVEIVREEEKTNPNVVKIVGSPLSATRLRALYFTRATAPWGEGPLYHHVGLYAYRRSALERFVALKPSPLERRERLEQLRALEAGMRIDAEIVRSLPLGVDTPQDLERARTILSN.

This sequence belongs to the KdsB family.

It is found in the cytoplasm. The enzyme catalyses 3-deoxy-alpha-D-manno-oct-2-ulosonate + CTP = CMP-3-deoxy-beta-D-manno-octulosonate + diphosphate. It participates in nucleotide-sugar biosynthesis; CMP-3-deoxy-D-manno-octulosonate biosynthesis; CMP-3-deoxy-D-manno-octulosonate from 3-deoxy-D-manno-octulosonate and CTP: step 1/1. The protein operates within bacterial outer membrane biogenesis; lipopolysaccharide biosynthesis. Functionally, activates KDO (a required 8-carbon sugar) for incorporation into bacterial lipopolysaccharide in Gram-negative bacteria. The chain is 3-deoxy-manno-octulosonate cytidylyltransferase from Mesorhizobium japonicum (strain LMG 29417 / CECT 9101 / MAFF 303099) (Mesorhizobium loti (strain MAFF 303099)).